Here is a 90-residue protein sequence, read N- to C-terminus: Small ribosomal subunit protein uS15c (90 aa).

It belongs to the universal ribosomal protein uS15 family. As to quaternary structure, part of the 30S ribosomal subunit.

The protein resides in the plastid. Its subcellular location is the chloroplast. In Lolium perenne (Perennial ryegrass), this protein is Small ribosomal subunit protein uS15c (rps15-A).